A 439-amino-acid chain; its full sequence is Omega-aminotransferase (439 aa).

Gly-112–Ser-113 contributes to the pyridoxal 5'-phosphate binding site. N6-(pyridoxal phosphate)lysine is present on Lys-281. Residue Thr-318 participates in pyridoxal 5'-phosphate binding.

This sequence belongs to the class-III pyridoxal-phosphate-dependent aminotransferase family. As to quaternary structure, homotetramer. The cofactor is pyridoxal 5'-phosphate.

The catalysed reaction is 3-oxopropanoate + L-alanine = beta-alanine + pyruvate. It catalyses the reaction 3-aminobutanoate + pyruvate = acetoacetate + L-alanine. It carries out the reaction benzylamine + pyruvate = benzaldehyde + L-alanine. The enzyme catalyses (S)-1-phenylethylamine + pyruvate = acetophenone + L-alanine. The catalysed reaction is 2-phenylethylamine + pyruvate = 2-phenylacetaldehyde + L-alanine. It catalyses the reaction 1-phenylpropylamine + pyruvate = 1-phenylpropan-1-one + L-alanine. It carries out the reaction 3-phenylpropylamine + pyruvate = 3-phenylpropanal + L-alanine. Aminotransferase that can use beta-amino acids, aliphatic amines, or aromatic amines as amino donors, and pyruvate as amino acceptor. Shows high activity for short-chain beta-amino acids, with the highest activity for 3-aminobutanoate and beta-alanine in vitro. Displays higher activity toward aromatic amines than aliphatic amines. May be involved in beta-alanine biosynthesis and/or degradation. The sequence is that of Omega-aminotransferase from Caulobacter vibrioides (strain ATCC 19089 / CIP 103742 / CB 15) (Caulobacter crescentus).